The chain runs to 700 residues: Calpain-2 catalytic subunit (700 aa).

Alanine 2 is subject to N-acetylalanine. Residues 2–19 (AGIAAKLVKDREAAEGLG) constitute a propeptide, anchors to the small subunit. One can recognise a Calpain catalytic domain in the interval 45–344 (LFQDPSFPAI…YSRLEICNLT (300 aa)). Ca(2+) is bound by residues isoleucine 89, glycine 91, and aspartate 96. Cysteine 105 is a catalytic residue. 3 residues coordinate Ca(2+): glutamate 175, glutamine 229, and lysine 230. Catalysis depends on residues histidine 262 and asparagine 286. Ca(2+) contacts are provided by glutamate 292, aspartate 299, and glutamate 323. Residues 345 to 514 (PDTLTSDTYK…KKADYQAVDD (170 aa)) are domain III. The tract at residues 515-529 (EIEANLEEFDISEDD) is linker. The domain IV stretch occupies residues 530 to 700 (IDDGFRRLFA…LISWLCFSVL (171 aa)). The Ca(2+) site is built by alanine 542, aspartate 545, glutamate 547, glutamate 552, aspartate 585, aspartate 587, serine 589, lysine 591, glutamate 596, aspartate 615, aspartate 617, serine 619, threonine 621, glutamate 626, aspartate 658, and asparagine 661. 2 consecutive EF-hand domains span residues 572–605 (FSIE…TKIQ) and 602–637 (TKIQ…AGFK). One can recognise an EF-hand 3 domain in the interval 667 to 700 (VRLETLFKIFKQLDPENTGTIELDLISWLCFSVL).

It belongs to the peptidase C2 family. As to quaternary structure, forms a heterodimer with a small (regulatory) subunit (CAPNS1). Interacts with CPEB3; this leads to cleavage of CPEB3. The cofactor is Ca(2+).

The protein localises to the cytoplasm. It is found in the cell membrane. The catalysed reaction is Broad endopeptidase specificity.. With respect to regulation, activated by 200-1000 micromolar concentrations of calcium and inhibited by calpastatin. Calcium-regulated non-lysosomal thiol-protease which catalyzes limited proteolysis of substrates involved in cytoskeletal remodeling and signal transduction. Proteolytically cleaves MYOC at 'Arg-226'. Proteolytically cleaves CPEB3 following neuronal stimulation which abolishes CPEB3 translational repressor activity, leading to translation of CPEB3 target mRNAs. The sequence is that of Calpain-2 catalytic subunit (CAPN2) from Macaca fascicularis (Crab-eating macaque).